A 533-amino-acid chain; its full sequence is Flavin-dependent halogenase gsfI (533 aa).

Residues Gly-14, Gly-17, and Glu-47 each coordinate FAD. Ser-331 and Gly-332 together coordinate chloride.

It belongs to the flavin-dependent halogenase family.

It catalyses the reaction griseophenone C + FADH2 + chloride + O2 = griseophenone B + FAD + 2 H2O + H(+). Its pathway is secondary metabolite biosynthesis; terpenoid biosynthesis. Functionally, flavin-dependent halogenase; part of the gene cluster that mediates the biosynthesis of griseofulvin, an important antifungal drug that has been in use for a long time for treating dermatophyte infections. The first step of the pathway is the formation of the heptaketide backbone by gsfA which is initiated by priming with acetyl-CoA, followed by sequential condensations of 6 malonyl-CoA units. The resulting benzophenone can undergo a spontaneous dehydration to form norlichexanthone. However, the true precursor for the griseofulvin biosynthesis is not norlichexanthone, but the heptaketide benzophenone that is O-methylated at 3-OH by gsfB to produce griseophenone D which is further methylated at 9-OH by gsfC to yield griseophenone C. Griseophenone C is then substrate of halogenase gsfI which is responsible for the regio-specific chlorination at the C13 position to form griseophenone B. The cytochrome P450 gsfF catalyzes the coupling of orcinol and phloroglucinol rings in griseophenone B to form desmethyl-dehydrogriseofulvin A which is further methylated at 5-OH by gsfD to yield dehydrogriseofulvin. Finally, gsfE performs stereospecific reduction of enone 18 of dehydrogriseofulvin to afford the final product griseofulvin. In Penicillium aethiopicum, this protein is Flavin-dependent halogenase gsfI.